We begin with the raw amino-acid sequence, 1624 residues long: Reverse gyrase (1624 aa).

Residues 1 to 42 (MKAIYRGMCPNCRGAITDERLSNKNPCEGCLSEPILSEDYNE) form an RG N-terminal-type zinc finger. Residues cysteine 9, cysteine 12, cysteine 27, and cysteine 30 each coordinate Zn(2+). Residues glutamine 89 and 106–113 (APTGMGKS) each bind ATP. Residues 93–256 (VKRIIRGKSF…KLKKQLAKLL (164 aa)) enclose the Helicase ATP-binding domain. The DEAD box signature appears at 213-216 (DDVD). The interval 636 to 1624 (DLVKSALMIV…LYEEIKRYVR (989 aa)) is topoisomerase I. In terms of domain architecture, Toprim spans 640–803 (SALMIVESPN…NIKRIEFHEV (164 aa)). Glutamate 646 serves as a coordination point for Mg(2+). The segment at 720–749 (IKRCRDCGHQFVDWEQKGVCPRCGSRNVHD) adopts an RG C-terminal-type zinc-finger fold. Residues cysteine 723, cysteine 726, cysteine 739, and cysteine 742 each contribute to the Zn(2+) site. Position 772 (aspartate 772) interacts with Mg(2+). In terms of domain architecture, Topo IA-type catalytic spans 819-1623 (NEDRVNAQLV…ELYEEIKRYV (805 aa)). Residues 1107 to 1222 (IFGVILGKGT…LSVYLYQIGI (116 aa)) form the DOD-type homing endonuclease domain. Tyrosine 1366 functions as the O-(5'-phospho-DNA)-tyrosine intermediate in the catalytic mechanism.

This sequence in the N-terminal section; belongs to the DEAD box helicase family. DDVD subfamily. It in the C-terminal section; belongs to the type IA topoisomerase family. Monomer. Zn(2+) serves as cofactor. The cofactor is Mg(2+). This protein undergoes a protein self splicing that involves a post-translational excision of the intervening region (intein) followed by peptide ligation.

It is found in the cytoplasm. The enzyme catalyses ATP + H2O = ADP + phosphate + H(+). In terms of biological role, modifies the topological state of DNA by introducing positive supercoils in an ATP-dependent process, increasing the linking number in steps of +1. Binds to single-stranded DNA, transiently cleaves and then rejoins the ends, introducing a positive supercoil in the process. The scissile phosphodiester is attacked by the catalytic tyrosine of the enzyme, resulting in the formation of a DNA-(5'-phosphotyrosyl)-enzyme intermediate. Probably involved in rewinding DNA strands in regions of the chromosome that have opened up to allow replication, transcription, DNA repair and/or for DNA protection. The sequence is that of Reverse gyrase from Pyrococcus horikoshii (strain ATCC 700860 / DSM 12428 / JCM 9974 / NBRC 100139 / OT-3).